A 151-amino-acid chain; its full sequence is Small ribosomal subunit protein uS15 (151 aa).

Over residues 1–11 (MPHRSRHKKGR) the composition is skewed to basic residues. A disordered region spans residues 1-24 (MPHRSRHKKGRSSSVRPPHPTVPT).

Belongs to the universal ribosomal protein uS15 family. In terms of assembly, part of the 30S ribosomal subunit.

The polypeptide is Small ribosomal subunit protein uS15 (Pyrobaculum calidifontis (strain DSM 21063 / JCM 11548 / VA1)).